The sequence spans 361 residues: MPNTLTVDLGHRSYPIVFAADVRNNVRDQVAELTTAGRKVAVFTDEQVASAQVGALEAMFGSSPRLAFAPGESAKSLASFGRAMDFLAAQKVDRRGVVFAFGGGVIGDLAGFIAASWLRGIDFYQVPTTLLAMVDSSVGGKTGINIPAGKNLVGAFHQPRGVFIGTDFLRTLPAREFAAGMAEVIKYGLLGDAALLELLERAPLSFVSPELAGVIRQCCALKAAFVQADERELAPEGGRALLNLGHTFGHAIEQVTGYGVYLHGEAVAIGMCAAARLSAKLGHLGGADVARVDAVVAAHRLPVKLRTPLVLMDLLAAMARDKKVRAGMPRFVVLRKLGEAVTQDDVPAELAAECFREVGAS.

NAD(+) is bound by residues 104 to 108, 128 to 129, K141, K150, and 168 to 171; these read GVIGD, TT, and FLRT. Zn(2+)-binding residues include E183, H246, and H263.

This sequence belongs to the sugar phosphate cyclases superfamily. Dehydroquinate synthase family. Requires Co(2+) as cofactor. Zn(2+) serves as cofactor. The cofactor is NAD(+).

The protein localises to the cytoplasm. The catalysed reaction is 7-phospho-2-dehydro-3-deoxy-D-arabino-heptonate = 3-dehydroquinate + phosphate. It participates in metabolic intermediate biosynthesis; chorismate biosynthesis; chorismate from D-erythrose 4-phosphate and phosphoenolpyruvate: step 2/7. Its function is as follows. Catalyzes the conversion of 3-deoxy-D-arabino-heptulosonate 7-phosphate (DAHP) to dehydroquinate (DHQ). This is 3-dehydroquinate synthase from Opitutus terrae (strain DSM 11246 / JCM 15787 / PB90-1).